The primary structure comprises 29 residues: Circulin-F (29 aa).

Positions 1–29 form a cross-link, cyclopeptide (Ala-Arg); sequence AIPCGESCVWIPCISAAIGCSCKNKVCYR. 3 disulfides stabilise this stretch: Cys4/Cys20, Cys8/Cys22, and Cys13/Cys27.

In terms of processing, this is a cyclic peptide.

Its function is as follows. Probably participates in a plant defense mechanism. Inhibits the cytopathic effects of the human immunodeficiency virus. The sequence is that of Circulin-F from Chassalia parviflora.